The following is a 252-amino-acid chain: Triosephosphate isomerase (252 aa).

9–11 (NWK) provides a ligand contact to substrate. His96 serves as the catalytic Electrophile. The active-site Proton acceptor is the Glu166. Residues Gly172, Ser212, and 233–234 (GG) contribute to the substrate site.

It belongs to the triosephosphate isomerase family. In terms of assembly, homodimer.

Its subcellular location is the cytoplasm. The catalysed reaction is D-glyceraldehyde 3-phosphate = dihydroxyacetone phosphate. It participates in carbohydrate biosynthesis; gluconeogenesis. Its pathway is carbohydrate degradation; glycolysis; D-glyceraldehyde 3-phosphate from glycerone phosphate: step 1/1. Involved in the gluconeogenesis. Catalyzes stereospecifically the conversion of dihydroxyacetone phosphate (DHAP) to D-glyceraldehyde-3-phosphate (G3P). The polypeptide is Triosephosphate isomerase (Prosthecochloris aestuarii (strain DSM 271 / SK 413)).